The sequence spans 467 residues: ATP synthase subunit beta (467 aa).

Residue 150 to 157 participates in ATP binding; that stretch reads GGAGVGKT.

The protein belongs to the ATPase alpha/beta chains family. F-type ATPases have 2 components, CF(1) - the catalytic core - and CF(0) - the membrane proton channel. CF(1) has five subunits: alpha(3), beta(3), gamma(1), delta(1), epsilon(1). CF(0) has three main subunits: a(1), b(2) and c(9-12). The alpha and beta chains form an alternating ring which encloses part of the gamma chain. CF(1) is attached to CF(0) by a central stalk formed by the gamma and epsilon chains, while a peripheral stalk is formed by the delta and b chains.

It localises to the cell inner membrane. The enzyme catalyses ATP + H2O + 4 H(+)(in) = ADP + phosphate + 5 H(+)(out). Its function is as follows. Produces ATP from ADP in the presence of a proton gradient across the membrane. The catalytic sites are hosted primarily by the beta subunits. The protein is ATP synthase subunit beta of Vibrio parahaemolyticus serotype O3:K6 (strain RIMD 2210633).